The following is a 314-amino-acid chain: 4-hydroxy-3-methylbut-2-enyl diphosphate reductase (314 aa).

Cys12 serves as a coordination point for [4Fe-4S] cluster. Residues His41 and His74 each coordinate (2E)-4-hydroxy-3-methylbut-2-enyl diphosphate. Dimethylallyl diphosphate is bound by residues His41 and His74. Residues His41 and His74 each coordinate isopentenyl diphosphate. Cys96 contacts [4Fe-4S] cluster. His124 contacts (2E)-4-hydroxy-3-methylbut-2-enyl diphosphate. His124 contributes to the dimethylallyl diphosphate binding site. Position 124 (His124) interacts with isopentenyl diphosphate. Glu126 (proton donor) is an active-site residue. Residue Thr167 participates in (2E)-4-hydroxy-3-methylbut-2-enyl diphosphate binding. Residue Cys197 coordinates [4Fe-4S] cluster. Positions 225, 226, 227, and 269 each coordinate (2E)-4-hydroxy-3-methylbut-2-enyl diphosphate. The dimethylallyl diphosphate site is built by Ser225, Ser226, Asn227, and Ser269. Residues Ser225, Ser226, Asn227, and Ser269 each coordinate isopentenyl diphosphate.

The protein belongs to the IspH family. It depends on [4Fe-4S] cluster as a cofactor.

It carries out the reaction isopentenyl diphosphate + 2 oxidized [2Fe-2S]-[ferredoxin] + H2O = (2E)-4-hydroxy-3-methylbut-2-enyl diphosphate + 2 reduced [2Fe-2S]-[ferredoxin] + 2 H(+). It catalyses the reaction dimethylallyl diphosphate + 2 oxidized [2Fe-2S]-[ferredoxin] + H2O = (2E)-4-hydroxy-3-methylbut-2-enyl diphosphate + 2 reduced [2Fe-2S]-[ferredoxin] + 2 H(+). The protein operates within isoprenoid biosynthesis; dimethylallyl diphosphate biosynthesis; dimethylallyl diphosphate from (2E)-4-hydroxy-3-methylbutenyl diphosphate: step 1/1. It participates in isoprenoid biosynthesis; isopentenyl diphosphate biosynthesis via DXP pathway; isopentenyl diphosphate from 1-deoxy-D-xylulose 5-phosphate: step 6/6. Its function is as follows. Catalyzes the conversion of 1-hydroxy-2-methyl-2-(E)-butenyl 4-diphosphate (HMBPP) into a mixture of isopentenyl diphosphate (IPP) and dimethylallyl diphosphate (DMAPP). Acts in the terminal step of the DOXP/MEP pathway for isoprenoid precursor biosynthesis. This Actinobacillus pleuropneumoniae serotype 7 (strain AP76) protein is 4-hydroxy-3-methylbut-2-enyl diphosphate reductase.